The chain runs to 209 residues: Thiamine-phosphate synthase (209 aa).

Residues 37–41 and Asn69 each bind 4-amino-2-methyl-5-(diphosphooxymethyl)pyrimidine; that span reads QYRDK. Mg(2+)-binding residues include Asp70 and Asp89. Residue Ser108 coordinates 4-amino-2-methyl-5-(diphosphooxymethyl)pyrimidine. Residue 135 to 137 participates in 2-[(2R,5Z)-2-carboxy-4-methylthiazol-5(2H)-ylidene]ethyl phosphate binding; sequence SPT. Position 138 (Lys138) interacts with 4-amino-2-methyl-5-(diphosphooxymethyl)pyrimidine. 2-[(2R,5Z)-2-carboxy-4-methylthiazol-5(2H)-ylidene]ethyl phosphate-binding positions include Gly165 and 185-186; that span reads VS.

Belongs to the thiamine-phosphate synthase family. It depends on Mg(2+) as a cofactor.

It carries out the reaction 2-[(2R,5Z)-2-carboxy-4-methylthiazol-5(2H)-ylidene]ethyl phosphate + 4-amino-2-methyl-5-(diphosphooxymethyl)pyrimidine + 2 H(+) = thiamine phosphate + CO2 + diphosphate. The enzyme catalyses 2-(2-carboxy-4-methylthiazol-5-yl)ethyl phosphate + 4-amino-2-methyl-5-(diphosphooxymethyl)pyrimidine + 2 H(+) = thiamine phosphate + CO2 + diphosphate. The catalysed reaction is 4-methyl-5-(2-phosphooxyethyl)-thiazole + 4-amino-2-methyl-5-(diphosphooxymethyl)pyrimidine + H(+) = thiamine phosphate + diphosphate. It participates in cofactor biosynthesis; thiamine diphosphate biosynthesis; thiamine phosphate from 4-amino-2-methyl-5-diphosphomethylpyrimidine and 4-methyl-5-(2-phosphoethyl)-thiazole: step 1/1. Its function is as follows. Condenses 4-methyl-5-(beta-hydroxyethyl)thiazole monophosphate (THZ-P) and 2-methyl-4-amino-5-hydroxymethyl pyrimidine pyrophosphate (HMP-PP) to form thiamine monophosphate (TMP). The chain is Thiamine-phosphate synthase from Halorhodospira halophila (strain DSM 244 / SL1) (Ectothiorhodospira halophila (strain DSM 244 / SL1)).